We begin with the raw amino-acid sequence, 97 residues long: MTSLLTTPSPREELMTTPILQPTEALSPEDGASTALIAVVITVVFLTLLSVVILIFFYLYKNKGSYVTYEPTEGEPSAIVQMESDLAKGSEKEEYFI.

Topologically, residues 1–36 (MTSLLTTPSPREELMTTPILQPTEALSPEDGASTAL) are extracellular. Thr2 is a glycosylation site (O-linked (GalNAc...) threonine). An O-linked (GalNAc...) serine glycan is attached at Ser3. O-linked (GalNAc...) threonine glycosylation is found at Thr6 and Thr7. An O-linked (GalNAc...) serine glycan is attached at Ser9. Residues Thr16, Thr17, and Thr23 are each glycosylated (O-linked (GalNAc...) threonine). Residues 37 to 57 (IAVVITVVFLTLLSVVILIFF) traverse the membrane as a helical; Signal-anchor for type III membrane protein segment. The Cytoplasmic portion of the chain corresponds to 58 to 97 (YLYKNKGSYVTYEPTEGEPSAIVQMESDLAKGSEKEEYFI).

Belongs to the SMAGP family. In terms of processing, O-glycosylated. The O-glycan is modified with sialic acid residues. Detected in breast, endometrium, colon and biliary tract. Detected in polarized epithelial structures characterized by cell-cell adhesion (at protein level).

The protein localises to the cell membrane. It localises to the cytoplasmic vesicle membrane. May play a role in epithelial cell-cell contacts. May play a role in tumor invasiveness and metastasis formation. In Homo sapiens (Human), this protein is Small cell adhesion glycoprotein (SMAGP).